The chain runs to 40 residues: Mu-thomitoxin-Hme1b (40 aa).

3 disulfide bridges follow: C2–C18, C9–C22, and C17–C33.

The protein belongs to the neurotoxin 19 (CSTX) family. Contains 3 disulfide bonds. In terms of tissue distribution, expressed by the venom gland.

It is found in the secreted. In terms of biological role, blocks the Nav1.2/SCN2A, Nav1.4/SCN4A, Nav1.5/SCN5A and Nav1.6/SCN8A sodium channels. Shows a slight preference for the Nav1.2 and Nav1.4 channels. Reduces the peak amplitude of the sodium current and negatively shifts the steady-state inactivation process. Does not shift the threshold potential of activation or the voltage corresponding to maximal current. Does not change the reversal potential of the sodium current. May act on site 1 of the receptor. This Heriaeus mellotteei (Crab spider) protein is Mu-thomitoxin-Hme1b.